We begin with the raw amino-acid sequence, 241 residues long: Uridylate kinase (241 aa).

ATP is bound at residue 12 to 15; the sequence is KISG. The involved in allosteric activation by GTP stretch occupies residues 20–25; that stretch reads GEKGTG. Gly-54 is a UMP binding site. The ATP site is built by Gly-55 and Arg-59. Residues Asp-74 and 135 to 142 contribute to the UMP site; that span reads TGNPYFST. Positions 163, 169, and 172 each coordinate ATP.

It belongs to the UMP kinase family. As to quaternary structure, homohexamer.

It localises to the cytoplasm. The enzyme catalyses UMP + ATP = UDP + ADP. The protein operates within pyrimidine metabolism; CTP biosynthesis via de novo pathway; UDP from UMP (UMPK route): step 1/1. With respect to regulation, allosterically activated by GTP. Inhibited by UTP. Functionally, catalyzes the reversible phosphorylation of UMP to UDP. The polypeptide is Uridylate kinase (Lactobacillus delbrueckii subsp. bulgaricus (strain ATCC 11842 / DSM 20081 / BCRC 10696 / JCM 1002 / NBRC 13953 / NCIMB 11778 / NCTC 12712 / WDCM 00102 / Lb 14)).